The sequence spans 727 residues: NADH-ubiquinone oxidoreductase 75 kDa subunit, mitochondrial (727 aa).

Residues 1 to 23 (MLRIPVRKALVGLSKSPKGCVRT) constitute a mitochondrion transit peptide. The 79-residue stretch at 30–108 (NLIEVFVDGQ…GWNILTNSEK (79 aa)) folds into the 2Fe-2S ferredoxin-type domain. Residues Cys64, Cys75, and Cys78 each contribute to the [2Fe-2S] cluster site. Lys84 is modified (N6-acetyllysine). Residue Cys92 participates in [2Fe-2S] cluster binding. The 4Fe-4S His(Cys)3-ligated-type domain maps to 108-147 (KSKKAREGVMELLLANHPLDCPICDQGGECDLQDQSMMFG). 8 residues coordinate [4Fe-4S] cluster: His124, Cys128, Cys131, Cys137, Cys176, Cys179, Cys182, and Cys226. The region spanning 245 to 301 (TRKTESIDVMDAVGSNIVVSTRTGEVMRILPRMHEDINEEWISDKTRFAYDGLKRQR) is the 4Fe-4S Mo/W bis-MGD-type domain. An N6-acetyllysine mark is found at Lys467, Lys499, and Lys709.

This sequence belongs to the complex I 75 kDa subunit family. In terms of assembly, core subunit of respiratory chain NADH dehydrogenase (Complex I) which is composed of 45 different subunits. This is the largest subunit of complex I and it is a component of the iron-sulfur (IP) fragment of the enzyme. Complex I associates with ubiquinol-cytochrome reductase complex (Complex III) to form supercomplexes. Interacts with MDM2 and AKAP1. [2Fe-2S] cluster is required as a cofactor. It depends on [4Fe-4S] cluster as a cofactor.

It is found in the mitochondrion inner membrane. It catalyses the reaction a ubiquinone + NADH + 5 H(+)(in) = a ubiquinol + NAD(+) + 4 H(+)(out). Core subunit of the mitochondrial membrane respiratory chain NADH dehydrogenase (Complex I) which catalyzes electron transfer from NADH through the respiratory chain, using ubiquinone as an electron acceptor. Essential for catalysing the entry and efficient transfer of electrons within complex I. Plays a key role in the assembly and stability of complex I and participates in the association of complex I with ubiquinol-cytochrome reductase complex (Complex III) to form supercomplexes. The chain is NADH-ubiquinone oxidoreductase 75 kDa subunit, mitochondrial (NDUFS1) from Pongo abelii (Sumatran orangutan).